We begin with the raw amino-acid sequence, 170 residues long: Xanthine-guanine phosphoribosyltransferase (170 aa).

5-phospho-alpha-D-ribose 1-diphosphate-binding positions include 41-42 (RG) and 98-106 (DDLTDTGKT). Asp-99 is a binding site for Mg(2+). Asp-102 lines the guanine pocket. Xanthine is bound at residue Asp-102. 102-106 (DTGKT) lines the GMP pocket.

This sequence belongs to the purine/pyrimidine phosphoribosyltransferase family. XGPT subfamily. In terms of assembly, homotetramer. It depends on Mg(2+) as a cofactor.

The protein resides in the cell inner membrane. It carries out the reaction GMP + diphosphate = guanine + 5-phospho-alpha-D-ribose 1-diphosphate. The catalysed reaction is XMP + diphosphate = xanthine + 5-phospho-alpha-D-ribose 1-diphosphate. It catalyses the reaction IMP + diphosphate = hypoxanthine + 5-phospho-alpha-D-ribose 1-diphosphate. The protein operates within purine metabolism; GMP biosynthesis via salvage pathway; GMP from guanine: step 1/1. It participates in purine metabolism; XMP biosynthesis via salvage pathway; XMP from xanthine: step 1/1. Purine salvage pathway enzyme that catalyzes the transfer of the ribosyl-5-phosphate group from 5-phospho-alpha-D-ribose 1-diphosphate (PRPP) to the N9 position of the 6-oxopurines guanine and xanthine to form the corresponding ribonucleotides GMP (guanosine 5'-monophosphate) and XMP (xanthosine 5'-monophosphate), with the release of PPi. To a lesser extent, also acts on hypoxanthine. The protein is Xanthine-guanine phosphoribosyltransferase of Brucella abortus (strain 2308).